The primary structure comprises 249 residues: UPF0246 protein Lreu_0493 (249 aa).

This sequence belongs to the UPF0246 family.

This is UPF0246 protein Lreu_0493 from Limosilactobacillus reuteri (strain DSM 20016) (Lactobacillus reuteri).